The sequence spans 490 residues: Bifunctional protein HldE (490 aa).

Residues 1 to 330 (MNNFDTLLQS…RKILPHASLA (330 aa)) are ribokinase. Position 205 to 208 (205 to 208 (NRKE)) interacts with ATP. Residue Asp275 is part of the active site. The cytidylyltransferase stretch occupies residues 358-490 (FTNGCFDILH…LVEKAREGTS (133 aa)).

In the N-terminal section; belongs to the carbohydrate kinase PfkB family. The protein in the C-terminal section; belongs to the cytidylyltransferase family. As to quaternary structure, homodimer.

The catalysed reaction is D-glycero-beta-D-manno-heptose 7-phosphate + ATP = D-glycero-beta-D-manno-heptose 1,7-bisphosphate + ADP + H(+). The enzyme catalyses D-glycero-beta-D-manno-heptose 1-phosphate + ATP + H(+) = ADP-D-glycero-beta-D-manno-heptose + diphosphate. It participates in nucleotide-sugar biosynthesis; ADP-L-glycero-beta-D-manno-heptose biosynthesis; ADP-L-glycero-beta-D-manno-heptose from D-glycero-beta-D-manno-heptose 7-phosphate: step 1/4. It functions in the pathway nucleotide-sugar biosynthesis; ADP-L-glycero-beta-D-manno-heptose biosynthesis; ADP-L-glycero-beta-D-manno-heptose from D-glycero-beta-D-manno-heptose 7-phosphate: step 3/4. Its function is as follows. Catalyzes the phosphorylation of D-glycero-D-manno-heptose 7-phosphate at the C-1 position to selectively form D-glycero-beta-D-manno-heptose-1,7-bisphosphate. Catalyzes the ADP transfer from ATP to D-glycero-beta-D-manno-heptose 1-phosphate, yielding ADP-D-glycero-beta-D-manno-heptose. This chain is Bifunctional protein HldE, found in Rhodopseudomonas palustris (strain HaA2).